The chain runs to 389 residues: 26S proteasome non-ATPase regulatory subunit 6 (389 aa).

In terms of domain architecture, PCI spans 193-361 (DFKQAAELFL…EIVETNRPDS (169 aa)).

This sequence belongs to the proteasome subunit S10 family. In terms of assembly, component of the 19S proteasome regulatory particle complex. The 26S proteasome consists of a 20S core particle (CP) and two 19S regulatory subunits (RP). The regulatory particle is made of a lid composed of 9 subunits including PSMD6, a base containing 6 ATPases and few additional components.

Functionally, component of the 26S proteasome, a multiprotein complex involved in the ATP-dependent degradation of ubiquitinated proteins. This complex plays a key role in the maintenance of protein homeostasis by removing misfolded or damaged proteins, which could impair cellular functions, and by removing proteins whose functions are no longer required. Therefore, the proteasome participates in numerous cellular processes, including cell cycle progression, apoptosis, or DNA damage repair. In Mus musculus (Mouse), this protein is 26S proteasome non-ATPase regulatory subunit 6 (Psmd6).